The sequence spans 103 residues: UPF0235 protein RL4503 (103 aa).

This sequence belongs to the UPF0235 family.

The polypeptide is UPF0235 protein RL4503 (Rhizobium johnstonii (strain DSM 114642 / LMG 32736 / 3841) (Rhizobium leguminosarum bv. viciae)).